We begin with the raw amino-acid sequence, 510 residues long: Flavonoid 3',5'-hydroxylase (510 aa).

Heme is bound at residue Cys447.

This sequence belongs to the cytochrome P450 family. Heme serves as cofactor.

It carries out the reaction a 3',5'-unsubstituted flavanone + 2 reduced [NADPH--hemoprotein reductase] + 2 O2 = a 3',5'-dihydroxyflavanone + 2 oxidized [NADPH--hemoprotein reductase] + 2 H2O + 2 H(+). It functions in the pathway pigment biosynthesis; anthocyanin biosynthesis. Its function is as follows. Catalyzes the 3'5'-hydroxylation of naringenin and eriodictyol to form 5,7,3,'4',5'-pentahydroxyflavanone and 3',5'-hydroxylation of dihydrokaempferol and dihydroquercetin to form dihydromyricetin. This is Flavonoid 3',5'-hydroxylase (CYP75A7) from Eustoma exaltatum subsp. russellianum (Bluebells).